Here is a 358-residue protein sequence, read N- to C-terminus: Transcriptional repressor protein KorB (358 aa).

Low complexity predominate over residues 1 to 42; sequence MTAAQAKTTKKNTAAAAQEAAGAAQPSGLGLDSIGDLSSLLD. Disordered stretches follow at residues 1 to 79 and 256 to 305; these read MTAA…FSPE and DPNT…DKLK. The span at 275–285 shows a compositional bias: acidic residues; it reads AGDGQDGEDGD. The segment covering 286–305 has biased composition (basic and acidic residues); the sequence is QDGKDAKEKGAKEPDPDKLK.

This sequence belongs to the ParB family.

Its function is as follows. In conjunction with KorA, inhibits the transcription of the kilA, trfA and korAB operons. Is also involved in the negative control of the kilB operon. The polypeptide is Transcriptional repressor protein KorB (korB) (Escherichia coli).